A 423-amino-acid polypeptide reads, in one-letter code: L-cysteine:1D-myo-inositol 2-amino-2-deoxy-alpha-D-glucopyranoside ligase (423 aa).

C45 provides a ligand contact to Zn(2+). L-cysteinyl-5'-AMP contacts are provided by residues 45–48 (CGIT), T60, and 83–85 (NVT). Residues 47-57 (ITPYDATHIGH) carry the 'HIGH' region motif. Positions 197-202 (DRGGDP) match the 'ERGGDP' region motif. Position 238 (W238) interacts with L-cysteinyl-5'-AMP. Residue C242 coordinates Zn(2+). L-cysteinyl-5'-AMP is bound at residue 260-262 (GSD). H267 serves as a coordination point for Zn(2+). I294 is a binding site for L-cysteinyl-5'-AMP. The 'KMSKS' region motif lies at 300–304 (KMSKS).

This sequence belongs to the class-I aminoacyl-tRNA synthetase family. MshC subfamily. Monomer. Requires Zn(2+) as cofactor.

The catalysed reaction is 1D-myo-inositol 2-amino-2-deoxy-alpha-D-glucopyranoside + L-cysteine + ATP = 1D-myo-inositol 2-(L-cysteinylamino)-2-deoxy-alpha-D-glucopyranoside + AMP + diphosphate + H(+). In terms of biological role, catalyzes the ATP-dependent condensation of GlcN-Ins and L-cysteine to form L-Cys-GlcN-Ins. The sequence is that of L-cysteine:1D-myo-inositol 2-amino-2-deoxy-alpha-D-glucopyranoside ligase from Jonesia denitrificans (strain ATCC 14870 / DSM 20603 / BCRC 15368 / CIP 55.134 / JCM 11481 / NBRC 15587 / NCTC 10816 / Prevot 55134) (Listeria denitrificans).